The sequence spans 364 residues: Fructose-1,6-bisphosphatase class 1 1 (364 aa).

Mg(2+) is bound by residues Glu-99, Asp-121, Leu-123, and Asp-124. Substrate-binding positions include 124–127 and Asn-220; that span reads DGSS. Glu-292 is a Mg(2+) binding site.

It belongs to the FBPase class 1 family. Homotetramer. It depends on Mg(2+) as a cofactor.

It localises to the cytoplasm. It catalyses the reaction beta-D-fructose 1,6-bisphosphate + H2O = beta-D-fructose 6-phosphate + phosphate. Its pathway is carbohydrate biosynthesis; gluconeogenesis. The polypeptide is Fructose-1,6-bisphosphatase class 1 1 (Albidiferax ferrireducens (strain ATCC BAA-621 / DSM 15236 / T118) (Rhodoferax ferrireducens)).